The following is a 208-amino-acid chain: 3-demethoxyubiquinol 3-hydroxylase (208 aa).

Residues glutamate 57, glutamate 87, histidine 90, glutamate 139, glutamate 171, and histidine 174 each contribute to the Fe cation site.

This sequence belongs to the COQ7 family. It depends on Fe cation as a cofactor.

Its subcellular location is the cell membrane. It carries out the reaction a 5-methoxy-2-methyl-3-(all-trans-polyprenyl)benzene-1,4-diol + AH2 + O2 = a 3-demethylubiquinol + A + H2O. Its pathway is cofactor biosynthesis; ubiquinone biosynthesis. Its function is as follows. Catalyzes the hydroxylation of 2-nonaprenyl-3-methyl-6-methoxy-1,4-benzoquinol during ubiquinone biosynthesis. This chain is 3-demethoxyubiquinol 3-hydroxylase, found in Burkholderia thailandensis (strain ATCC 700388 / DSM 13276 / CCUG 48851 / CIP 106301 / E264).